Reading from the N-terminus, the 1171-residue chain is ATP-dependent helicase/deoxyribonuclease subunit B (1171 aa).

A UvrD-like helicase ATP-binding domain is found at 1 to 343; it reads MSLRFVIGRA…LVAEENYRYR (343 aa). 8-15 contributes to the ATP binding site; it reads GRAGSGKS. Positions 281–587 constitute a UvrD-like helicase C-terminal domain; sequence MEQPRFHSPA…QFANIPPSLD (307 aa). [4Fe-4S] cluster contacts are provided by C805, C1129, C1132, and C1138.

Belongs to the helicase family. AddB/RexB type 1 subfamily. Heterodimer of AddA and AddB. Mg(2+) serves as cofactor. Requires [4Fe-4S] cluster as cofactor.

The heterodimer acts as both an ATP-dependent DNA helicase and an ATP-dependent, dual-direction single-stranded exonuclease. Recognizes the chi site generating a DNA molecule suitable for the initiation of homologous recombination. The AddB subunit has 5' -&gt; 3' nuclease activity but not helicase activity. This is ATP-dependent helicase/deoxyribonuclease subunit B from Bacillus thuringiensis (strain Al Hakam).